The following is a 289-amino-acid chain: ATP synthase subunit a (289 aa).

6 consecutive transmembrane segments (helical) span residues 43 to 63 (AFHV…VLLF), 103 to 123 (VIAP…AVDL), 160 to 180 (FSVF…GGFI), 193 to 213 (IFVQ…TLIA), 232 to 252 (VFIL…GLGV), and 259 to 279 (AVFH…LTIV).

The protein belongs to the ATPase A chain family. F-type ATPases have 2 components, CF(1) - the catalytic core - and CF(0) - the membrane proton channel. CF(1) has five subunits: alpha(3), beta(3), gamma(1), delta(1), epsilon(1). CF(0) has three main subunits: a(1), b(2) and c(9-12). The alpha and beta chains form an alternating ring which encloses part of the gamma chain. CF(1) is attached to CF(0) by a central stalk formed by the gamma and epsilon chains, while a peripheral stalk is formed by the delta and b chains.

It is found in the cell inner membrane. In terms of biological role, key component of the proton channel; it plays a direct role in the translocation of protons across the membrane. This Pseudomonas fluorescens (strain Pf0-1) protein is ATP synthase subunit a.